The following is a 297-amino-acid chain: Beta-1,3-galactosyltransferase 5 (297 aa).

Residues 1-7 (MAFPKMR) lie on the Cytoplasmic side of the membrane. Residues 8–28 (LMYVCLLVLGALCVYFSMYSL) traverse the membrane as a helical; Signal-anchor for type II membrane protein segment. Over 29–297 (NLFKEQSFVY…KPRTLLDYWQ (269 aa)) the chain is Lumenal. Residues Asn130, Asn174, and Asn231 are each glycosylated (N-linked (GlcNAc...) asparagine).

The protein belongs to the glycosyltransferase 31 family.

It localises to the golgi apparatus membrane. It carries out the reaction a globoside Gb4Cer (d18:1(4E)) + UDP-alpha-D-galactose = a globoside GalGb4Cer (d18:1(4E)) + UDP + H(+). Its pathway is protein modification; protein glycosylation. Functionally, catalyzes the transfer of Gal to GlcNAc-based acceptors with a preference for the core3 O-linked glycan GlcNAc(beta1,3)GalNAc structure. Can use glycolipid LC3Cer as an efficient acceptor. The chain is Beta-1,3-galactosyltransferase 5 (B3GALT5) from Pan troglodytes (Chimpanzee).